We begin with the raw amino-acid sequence, 458 residues long: Sugar transporter ERD6-like 10 (458 aa).

Transmembrane regions (helical) follow at residues 17-37, 66-86, 96-116, 119-139, 150-170, 174-194, 257-277, 292-312, 319-339, 350-370, 393-413, and 419-439; these read ITAC…SYGC, FLNL…VILG, LFCI…WLDL, ISLG…IAEI, ASTL…GTVI, VLAV…YFIP, LVVG…GITY, LGSM…LILV, PLLL…GVSF, FIPV…AIGI, IVAL…NFMF, and GTFY…WMLV.

Belongs to the major facilitator superfamily. Sugar transporter (TC 2.A.1.1) family.

The protein resides in the membrane. Functionally, sugar transporter. The chain is Sugar transporter ERD6-like 10 from Arabidopsis thaliana (Mouse-ear cress).